Here is a 344-residue protein sequence, read N- to C-terminus: N-acetyl-gamma-glutamyl-phosphate reductase (344 aa).

Cys149 is an active-site residue.

Belongs to the NAGSA dehydrogenase family. Type 1 subfamily.

It localises to the cytoplasm. It carries out the reaction N-acetyl-L-glutamate 5-semialdehyde + phosphate + NADP(+) = N-acetyl-L-glutamyl 5-phosphate + NADPH + H(+). The protein operates within amino-acid biosynthesis; L-arginine biosynthesis; N(2)-acetyl-L-ornithine from L-glutamate: step 3/4. Functionally, catalyzes the NADPH-dependent reduction of N-acetyl-5-glutamyl phosphate to yield N-acetyl-L-glutamate 5-semialdehyde. The sequence is that of N-acetyl-gamma-glutamyl-phosphate reductase from Thermoanaerobacter sp. (strain X514).